The following is a 284-amino-acid chain: Bifunctional protein FolD (284 aa).

NADP(+) contacts are provided by residues glycine 165 to serine 167, serine 190, and valine 231.

It belongs to the tetrahydrofolate dehydrogenase/cyclohydrolase family. In terms of assembly, homodimer.

It catalyses the reaction (6R)-5,10-methylene-5,6,7,8-tetrahydrofolate + NADP(+) = (6R)-5,10-methenyltetrahydrofolate + NADPH. It carries out the reaction (6R)-5,10-methenyltetrahydrofolate + H2O = (6R)-10-formyltetrahydrofolate + H(+). Its pathway is one-carbon metabolism; tetrahydrofolate interconversion. Catalyzes the oxidation of 5,10-methylenetetrahydrofolate to 5,10-methenyltetrahydrofolate and then the hydrolysis of 5,10-methenyltetrahydrofolate to 10-formyltetrahydrofolate. The protein is Bifunctional protein FolD of Geobacillus thermodenitrificans (strain NG80-2).